Reading from the N-terminus, the 159-residue chain is Peptide deformylase (159 aa).

Residues Cys-88 and His-130 each contribute to the Fe cation site. Residue Glu-131 is part of the active site. Position 134 (His-134) interacts with Fe cation.

The protein belongs to the polypeptide deformylase family. Fe(2+) is required as a cofactor.

It catalyses the reaction N-terminal N-formyl-L-methionyl-[peptide] + H2O = N-terminal L-methionyl-[peptide] + formate. Functionally, removes the formyl group from the N-terminal Met of newly synthesized proteins. Requires at least a dipeptide for an efficient rate of reaction. N-terminal L-methionine is a prerequisite for activity but the enzyme has broad specificity at other positions. This chain is Peptide deformylase, found in Caldanaerobacter subterraneus subsp. tengcongensis (strain DSM 15242 / JCM 11007 / NBRC 100824 / MB4) (Thermoanaerobacter tengcongensis).